Reading from the N-terminus, the 235-residue chain is Segregation and condensation protein A (235 aa).

This sequence belongs to the ScpA family. Component of a cohesin-like complex composed of ScpA, ScpB and the Smc homodimer, in which ScpA and ScpB bind to the head domain of Smc. The presence of the three proteins is required for the association of the complex with DNA.

The protein localises to the cytoplasm. Its function is as follows. Participates in chromosomal partition during cell division. May act via the formation of a condensin-like complex containing Smc and ScpB that pull DNA away from mid-cell into both cell halves. The sequence is that of Segregation and condensation protein A from Streptococcus uberis (strain ATCC BAA-854 / 0140J).